We begin with the raw amino-acid sequence, 460 residues long: MAVKEYTGLSEIRGPIVVVENVSGVRYDEVVELILENGEKRTGRVIIAGENVAIIQVFEGTEEMDIEGTRVRFLGKPLEVSLSPDLLGRTLDGLGKPRDNLGEIVPEKTVDINGSPINPSAREYPRNFIQTGISSIDVLMTLIRGQKLPIFAGNGLPYNRLAVQIARQAKVTTEEEFAVVFAAIGLRKDDANFIVRSLEESGAIKNMVVVLNLASDSVAERIATPRVALTIAEYLAFDLGMHVLVILNDMTNYCEALRELSNYRGEVPGRKGYPGYLYSDLASIYERAGIIKGRSGSITQIPILTMPNDDITHPIPDLTGYITEGQIVMSRSLFGKGIYPPIDILSSLSRLMKDGIGEGYTREDHPDVASQLFSAYSRVMEVRSIASIVGEEDLPEIDKLYLKFGEEFEHLFINQSFDEERSIEQSLDLAWKILSILPETELTRINREYIKKYYKASDET.

The protein belongs to the ATPase alpha/beta chains family.

Its function is as follows. Produces ATP from ADP in the presence of a proton gradient across the membrane. The V-type beta chain is a regulatory subunit. The polypeptide is V-type ATP synthase beta chain (Thermotoga neapolitana (strain ATCC 49049 / DSM 4359 / NBRC 107923 / NS-E)).